The sequence spans 135 residues: Lactoylglutathione lyase (135 aa).

Positions 2–126 (QILHTMLRVG…DGYKIEFIEN (125 aa)) constitute a VOC domain. H5 contacts Ni(2+). R9 contacts substrate. E56 provides a ligand contact to Ni(2+). Substrate-binding residues include N60 and H74. Residues H74 and E122 each coordinate Ni(2+). E122 acts as the Proton donor/acceptor in catalysis.

It belongs to the glyoxalase I family. As to quaternary structure, homodimer. It depends on Ni(2+) as a cofactor.

It catalyses the reaction (R)-S-lactoylglutathione = methylglyoxal + glutathione. It functions in the pathway secondary metabolite metabolism; methylglyoxal degradation; (R)-lactate from methylglyoxal: step 1/2. Catalyzes the conversion of hemimercaptal, formed from methylglyoxal and glutathione, to S-lactoylglutathione. This is Lactoylglutathione lyase (gloA) from Haemophilus influenzae (strain ATCC 51907 / DSM 11121 / KW20 / Rd).